Consider the following 296-residue polypeptide: UDP-N-acetylglucosamine transporter TMEM241 homolog (296 aa).

The next 10 membrane-spanning stretches (helical) occupy residues 7 to 29 (AVGLTFCCFYLSSYFTNKYVLSV), 41 to 61 (WQTLVGGLILHICWKVGWLEI), 67 to 87 (SDVVLWLPGCALFVGIIYAGS), 93 to 113 (LPIPVFFTLHNAAEVVSYGFQ), 126 to 146 (IFSIFLLLLSAGCLPLHDPQF), 147 to 167 (DADGYFWAVIHLFCVGCYKVF), 187 to 207 (VFSVVLLGLASHPTGDLISAL), 217 to 237 (FHSGCCASGILGFLLMLASVK), 248 to 266 (ASWNFVAKVITAGLSLIYF), and 272 to 291 (VPLTLCLLAGGLGEAVLVYA).

Belongs to the nucleotide-sugar transporter family. SLC35A subfamily.

It is found in the golgi apparatus. It localises to the cis-Golgi network membrane. Golgi-localized UDP-N-acetylglucosamine (UDP-GlcNAc) transporter that transports UDP-N-acetylglucosamine into Golgi lumen. The polypeptide is UDP-N-acetylglucosamine transporter TMEM241 homolog (tmem241) (Xenopus laevis (African clawed frog)).